The primary structure comprises 448 residues: Exodeoxyribonuclease 7 large subunit (448 aa).

It belongs to the XseA family. Heterooligomer composed of large and small subunits.

It is found in the cytoplasm. The catalysed reaction is Exonucleolytic cleavage in either 5'- to 3'- or 3'- to 5'-direction to yield nucleoside 5'-phosphates.. In terms of biological role, bidirectionally degrades single-stranded DNA into large acid-insoluble oligonucleotides, which are then degraded further into small acid-soluble oligonucleotides. This Shewanella baltica (strain OS195) protein is Exodeoxyribonuclease 7 large subunit.